The sequence spans 276 residues: NADPH-dependent 7-cyano-7-deazaguanine reductase (276 aa).

80 to 82 (VES) is a substrate binding site. 82 to 83 (SK) serves as a coordination point for NADPH. The active-site Thioimide intermediate is C183. Residue D190 is the Proton donor of the active site. 222–223 (HE) serves as a coordination point for substrate. 251 to 252 (RG) contributes to the NADPH binding site.

Belongs to the GTP cyclohydrolase I family. QueF type 2 subfamily. Homodimer.

The protein localises to the cytoplasm. It carries out the reaction 7-aminomethyl-7-carbaguanine + 2 NADP(+) = 7-cyano-7-deazaguanine + 2 NADPH + 3 H(+). The protein operates within tRNA modification; tRNA-queuosine biosynthesis. Its function is as follows. Catalyzes the NADPH-dependent reduction of 7-cyano-7-deazaguanine (preQ0) to 7-aminomethyl-7-deazaguanine (preQ1). The chain is NADPH-dependent 7-cyano-7-deazaguanine reductase from Burkholderia orbicola (strain MC0-3).